The chain runs to 83 residues: Short neurotoxin 3FTx-Oxy3 (83 aa).

The N-terminal stretch at 1-21 (MKTLLLTLVVVTIVCLDLGYT) is a signal peptide. 4 cysteine pairs are disulfide-bonded: Cys24–Cys45, Cys38–Cys62, Cys64–Cys75, and Cys76–Cys81.

The protein belongs to the three-finger toxin family. Short-chain subfamily. Type I alpha-neurotoxin sub-subfamily. As to expression, expressed by the venom gland.

Its subcellular location is the secreted. Functionally, binds to muscle nicotinic acetylcholine receptor (nAChR) and inhibit acetylcholine from binding to the receptor, thereby impairing neuromuscular transmission. The chain is Short neurotoxin 3FTx-Oxy3 from Oxyuranus microlepidotus (Inland taipan).